Consider the following 275-residue polypeptide: Large ribosomal subunit protein uL2 (275 aa).

Residues 223 to 260 (VAMNPVDHPHGGGEGRTSGGRHPVSPWGLPTKGYKTRS) form a disordered region.

It belongs to the universal ribosomal protein uL2 family. As to quaternary structure, part of the 50S ribosomal subunit. Forms a bridge to the 30S subunit in the 70S ribosome.

Its function is as follows. One of the primary rRNA binding proteins. Required for association of the 30S and 50S subunits to form the 70S ribosome, for tRNA binding and peptide bond formation. It has been suggested to have peptidyltransferase activity; this is somewhat controversial. Makes several contacts with the 16S rRNA in the 70S ribosome. The sequence is that of Large ribosomal subunit protein uL2 from Legionella pneumophila (strain Paris).